We begin with the raw amino-acid sequence, 453 residues long: Endoglucanase A (453 aa).

The first 26 residues, 1–26, serve as a signal peptide directing secretion; it reads MNCRKYLLSGLAVFGLAATSAVAALS. The active-site Nucleophile is Asp-82. The interval 115 to 126 is linker ('hinge') (Pro-Thr box); sequence TTPTTRKPTTTP. His-417 is an active-site residue.

This sequence belongs to the glycosyl hydrolase 9 (cellulase E) family. Monomer.

Its subcellular location is the periplasm. The enzyme catalyses Endohydrolysis of (1-&gt;4)-beta-D-glucosidic linkages in cellulose, lichenin and cereal beta-D-glucans.. In terms of biological role, high levels of endoglucanase activity detected on acid-swollen cellulose, ball-milled cellulose, and carboxymethyl cellulose; moderate levels detected on filter paper, phosphoric acid-swollen cellulose, lichenan, and xylan. This Fibrobacter succinogenes (Bacteroides succinogenes) protein is Endoglucanase A (endA).